A 119-amino-acid chain; its full sequence is Ribonuclease P protein component (119 aa).

It belongs to the RnpA family. Consists of a catalytic RNA component (M1 or rnpB) and a protein subunit.

It catalyses the reaction Endonucleolytic cleavage of RNA, removing 5'-extranucleotides from tRNA precursor.. Its function is as follows. RNaseP catalyzes the removal of the 5'-leader sequence from pre-tRNA to produce the mature 5'-terminus. It can also cleave other RNA substrates such as 4.5S RNA. The protein component plays an auxiliary but essential role in vivo by binding to the 5'-leader sequence and broadening the substrate specificity of the ribozyme. The protein is Ribonuclease P protein component of Salmonella schwarzengrund (strain CVM19633).